We begin with the raw amino-acid sequence, 905 residues long: Protein translocase subunit SecA (905 aa).

ATP contacts are provided by residues Gln89, 107–111, and Asp502; that span reads GEGKT. Cys887, Cys889, Cys898, and His899 together coordinate Zn(2+).

It belongs to the SecA family. In terms of assembly, monomer and homodimer. Part of the essential Sec protein translocation apparatus which comprises SecA, SecYEG and auxiliary proteins SecDF-YajC and YidC. Zn(2+) serves as cofactor.

It is found in the cell inner membrane. Its subcellular location is the cytoplasm. The catalysed reaction is ATP + H2O + cellular proteinSide 1 = ADP + phosphate + cellular proteinSide 2.. Part of the Sec protein translocase complex. Interacts with the SecYEG preprotein conducting channel. Has a central role in coupling the hydrolysis of ATP to the transfer of proteins into and across the cell membrane, serving both as a receptor for the preprotein-SecB complex and as an ATP-driven molecular motor driving the stepwise translocation of polypeptide chains across the membrane. In Rhizobium leguminosarum bv. trifolii (strain WSM2304), this protein is Protein translocase subunit SecA.